The primary structure comprises 33 residues: Photosystem II reaction center protein Psb30 (33 aa).

Residues 5-25 (LITQLASLILIVASGPIVIGL) traverse the membrane as a helical segment.

This sequence belongs to the Psb30/Ycf12 family. In terms of assembly, PSII is composed of 1 copy each of membrane proteins PsbA, PsbB, PsbC, PsbD, PsbE, PsbF, PsbH, PsbI, PsbJ, PsbK, PsbL, PsbM, PsbT, PsbX, PsbY, PsbZ, Psb30/Ycf12, peripheral proteins of the oxygen-evolving complex and a large number of cofactors. It forms dimeric complexes.

It localises to the plastid. The protein localises to the chloroplast thylakoid membrane. Functionally, a core subunit of photosystem II (PSII), probably helps stabilize the reaction center. The polypeptide is Photosystem II reaction center protein Psb30 (Lepocinclis buetschlii).